A 50-amino-acid polypeptide reads, in one-letter code: Large ribosomal subunit protein bL33 (50 aa).

This sequence belongs to the bacterial ribosomal protein bL33 family.

The sequence is that of Large ribosomal subunit protein bL33 (rpmG) from Aquifex aeolicus (strain VF5).